A 208-amino-acid chain; its full sequence is Protein-L-isoaspartate O-methyltransferase (208 aa).

Ser59 is a catalytic residue.

The protein belongs to the methyltransferase superfamily. L-isoaspartyl/D-aspartyl protein methyltransferase family.

It is found in the cytoplasm. It catalyses the reaction [protein]-L-isoaspartate + S-adenosyl-L-methionine = [protein]-L-isoaspartate alpha-methyl ester + S-adenosyl-L-homocysteine. Catalyzes the methyl esterification of L-isoaspartyl residues in peptides and proteins that result from spontaneous decomposition of normal L-aspartyl and L-asparaginyl residues. It plays a role in the repair and/or degradation of damaged proteins. The sequence is that of Protein-L-isoaspartate O-methyltransferase from Vibrio campbellii (strain ATCC BAA-1116).